A 288-amino-acid chain; its full sequence is Cyclic UMP-AMP synthase (288 aa).

The disordered stretch occupies residues Met-1–Thr-23. Residue Gln-46 coordinates UTP. Gln-46–Ser-48 contacts ATP. Asp-60 and Asp-62 together coordinate Mg(2+). UTP contacts are provided by residues Asp-62 and Arg-116–Lys-120. Asp-129 is a binding site for Mg(2+). Asn-166 serves as a coordination point for UTP. Residues Lys-194, Ser-212, and Glu-265 each coordinate ATP.

The protein belongs to the CD-NTase family. E01 subfamily. Requires Mg(2+) as cofactor.

The enzyme catalyses UTP + ATP = 3',3'-cUAMP + 2 diphosphate. Cyclic nucleotide synthase (second messenger synthase) of a CBASS antivirus system. CBASS (cyclic oligonucleotide-based antiphage signaling system) provides immunity against bacteriophage. The CD-NTase protein synthesizes cyclic nucleotides in response to infection; these serve as specific second messenger signals. The signals activate a diverse range of effectors, leading to bacterial cell death and thus abortive phage infection. A type I-B(UU) CBASS system. Functionally, cyclic dinucleotide synthase that catalyzes the synthesis of 3'3'-cyclic UMP-AMP (cUMP-AMP) from UTP and ATP, a second messenger for cell signal transduction. The chain is Cyclic UMP-AMP synthase from Rhodothermus marinus (strain SG0.5JP17-172).